The sequence spans 1205 residues: Solute carrier family 12 member 2 (1205 aa).

Met-1 is modified (N-acetylmethionine). Low complexity predominate over residues Met-1–Ala-22. The interval Met-1–Ala-102 is disordered. Over Met-1–Gly-279 the chain is Cytoplasmic. The span at Gly-23 to Arg-35 shows a compositional bias: basic residues. 2 positions are modified to phosphoserine: Ser-74 and Ser-76. An RFXV motif 1 motif is present at residues Arg-77–Val-80. A compositionally biased stretch (low complexity) spans Ala-87–Ala-102. The short motif at Arg-133–Val-136 is the RFXV motif 2 element. The segment covering Ala-143–Ala-155 has biased composition (low complexity). Residues Ala-143–Gly-187 form a disordered region. Phosphothreonine occurs at positions 196, 200, 205, 210, and 223. At Ser-235 the chain carries Phosphoserine. Residue Thr-259 is modified to Phosphothreonine. The discontinuously helical transmembrane segment at Trp-280–Gly-309 threads the bilayer. Residue Leu-290 participates in Na(+) binding. K(+)-binding residues include Asn-291 and Ile-292. Trp-293 is a Na(+) binding site. Positions 294, 295, and 296 each coordinate chloride. Residues Ile-310–Leu-329 form a helical membrane-spanning segment. The Cytoplasmic portion of the chain corresponds to Ser-330 to Ala-360. Residues Ile-361–Leu-388 traverse the membrane as a helical segment. Phe-365 contacts chloride. A K(+)-binding site is contributed by Tyr-376. Residues Lys-389 to Glu-398 are Extracellular-facing. A helical transmembrane segment spans residues Ile-399–Glu-422. Residues Trp-423–Ala-425 are Cytoplasmic-facing. A helical membrane pass occupies residues Lys-426 to Phe-447. Residues Ile-448–Thr-479 lie on the Extracellular side of the membrane. Residues Phe-480–Gly-497 form a discontinuously helical membrane-spanning segment. K(+) is bound by residues Pro-489, Ala-490, and Thr-492. Residues Pro-489 and Ala-490 each coordinate chloride. Residues Gly-493 and Ile-494 each coordinate chloride. Topologically, residues Ala-498 to Pro-512 are cytoplasmic. Residues Lys-513 to Gly-534 form a helical membrane-spanning segment. The Extracellular portion of the chain corresponds to Ser-535–Gly-591. N-linked (GlcNAc...) asparagine glycosylation is found at Asn-546 and Asn-555. 2 disulfide bridges follow: Cys-556/Cys-561 and Cys-570/Cys-575. Residues Phe-592–Pro-616 form a helical membrane-spanning segment. Positions 603, 606, and 607 each coordinate Na(+). The Cytoplasmic segment spans residues Lys-617–Pro-644. 2 helical membrane-spanning segments follow: residues Leu-645–Asn-665 and Val-666–Phe-684. Residues Phe-675 and Tyr-679 each contribute to the chloride site. Over Ser-685–Trp-707 the chain is Cytoplasmic. 2 helical membrane-spanning segments follow: residues Ile-708 to Trp-725 and Trp-726 to Leu-738. Over Tyr-739 to Ser-1205 the chain is Cytoplasmic. The segment at Ser-754–Ser-771 is scissor helix. Phosphoserine is present on residues Ser-933 and Ser-937. A disordered region spans residues Ser-953 to Glu-986. Ser-987 carries the phosphoserine modification.

This sequence belongs to the SLC12A transporter family. Homodimer; adopts a domain-swap conformation at the scissor helices connecting the transmembrane domain and C-terminal domain. In terms of processing, phosphorylated at Thr-196, Thr-200 and Thr-205 by OXSR1/OSR1 and STK39/SPAK downstream of WNK kinases (WNK1, WNK2, WNK3 or WNK4), promoting its activity. In terms of tissue distribution, widely expressed. High expression found in the cochlea, cochlear lateral wall, and the choroid plexus. Lower expression found in the cerebellum and the cortex.

It is found in the basolateral cell membrane. It carries out the reaction K(+)(out) + 2 chloride(out) + Na(+)(out) = K(+)(in) + 2 chloride(in) + Na(+)(in). With respect to regulation, activated following phosphorylation by OXSR1/OSR1 and STK39/SPAK downstream of WNK kinases (WNK1, WNK2, WNK3 or WNK4). Inhibited by bumetanide and furosemide. In terms of biological role, cation-chloride cotransporter which mediates the electroneutral transport of chloride, potassium and/or sodium ions across the membrane. Plays a vital role in the regulation of ionic balance and cell volume. In Mus musculus (Mouse), this protein is Solute carrier family 12 member 2 (Slc12a2).